The sequence spans 408 residues: DNA polymerase processivity factor (408 aa).

Positions 344-353 (KKRRNLLTKR) match the Nuclear localization signal motif.

It belongs to the herpesviridae DNA polymerase processivity factor family. As to quaternary structure, interacts with the DNA polymerase catalytic subunit. Interacts with the origin-binding protein.

Its subcellular location is the host nucleus. Its function is as follows. Plays an essential role in viral DNA replication by acting as the polymerase accessory subunit. Associates with the viral polymerase to increase its processivity and forms high-affinity direct interactions with DNA. Facilitates the origin-binding protein loading onto DNA thus increasing its ability to assemble into a functional complex capable of unwinding duplex DNA. The chain is DNA polymerase processivity factor from Varicella-zoster virus (strain Dumas) (HHV-3).